The chain runs to 185 residues: Ribosome-recycling factor (185 aa).

This sequence belongs to the RRF family.

It is found in the cytoplasm. Its function is as follows. Responsible for the release of ribosomes from messenger RNA at the termination of protein biosynthesis. May increase the efficiency of translation by recycling ribosomes from one round of translation to another. This is Ribosome-recycling factor from Aliivibrio fischeri (strain ATCC 700601 / ES114) (Vibrio fischeri).